The primary structure comprises 267 residues: Ubiquinone biosynthesis protein COQ4, mitochondrial (267 aa).

Residues 1-17 constitute a mitochondrion transit peptide; that stretch reads MSRLKIPSQLLRGGRGF. Histidine 153, aspartate 154, histidine 157, and glutamate 169 together coordinate Zn(2+).

The protein belongs to the COQ4 family. In terms of assembly, component of a multi-subunit COQ enzyme complex, composed of at least COQ3, COQ4, COQ5, COQ6, COQ7 and COQ9. Zn(2+) is required as a cofactor.

It localises to the mitochondrion inner membrane. It catalyses the reaction a 4-hydroxy-3-methoxy-5-(all-trans-polyprenyl)benzoate + H(+) = a 2-methoxy-6-(all-trans-polyprenyl)phenol + CO2. The protein operates within cofactor biosynthesis; ubiquinone biosynthesis. In terms of biological role, lyase that catalyzes the C1-decarboxylation of 4-hydroxy-3-methoxy-5-(all-trans-polyprenyl)benzoic acid into 2-methoxy-6-(all-trans-polyprenyl)phenol during ubiquinone biosynthesis. In Arthroderma otae (strain ATCC MYA-4605 / CBS 113480) (Microsporum canis), this protein is Ubiquinone biosynthesis protein COQ4, mitochondrial.